Consider the following 370-residue polypeptide: 3-dehydroquinate synthase (370 aa).

NAD(+) is bound by residues Asp-70–Lys-75, Gly-104–Asp-108, Thr-128–Thr-129, Lys-141, Lys-150, and Thr-168–Thr-171. Residues Glu-183, His-246, and His-262 each contribute to the Zn(2+) site.

Belongs to the sugar phosphate cyclases superfamily. Dehydroquinate synthase family. Co(2+) is required as a cofactor. It depends on Zn(2+) as a cofactor. Requires NAD(+) as cofactor.

It is found in the cytoplasm. It carries out the reaction 7-phospho-2-dehydro-3-deoxy-D-arabino-heptonate = 3-dehydroquinate + phosphate. It functions in the pathway metabolic intermediate biosynthesis; chorismate biosynthesis; chorismate from D-erythrose 4-phosphate and phosphoenolpyruvate: step 2/7. In terms of biological role, catalyzes the conversion of 3-deoxy-D-arabino-heptulosonate 7-phosphate (DAHP) to dehydroquinate (DHQ). The polypeptide is 3-dehydroquinate synthase (Rhodococcus opacus (strain B4)).